The chain runs to 632 residues: Phosphomethylpyrimidine synthase (632 aa).

Substrate-binding positions include N237, M266, Y295, H331, 351–353 (SRG), 392–395 (DGLR), and E431. H435 contributes to the Zn(2+) binding site. Y458 provides a ligand contact to substrate. A Zn(2+)-binding site is contributed by H499. [4Fe-4S] cluster contacts are provided by C579, C582, and C587.

This sequence belongs to the ThiC family. As to quaternary structure, homodimer. [4Fe-4S] cluster is required as a cofactor.

The catalysed reaction is 5-amino-1-(5-phospho-beta-D-ribosyl)imidazole + S-adenosyl-L-methionine = 4-amino-2-methyl-5-(phosphooxymethyl)pyrimidine + CO + 5'-deoxyadenosine + formate + L-methionine + 3 H(+). It functions in the pathway cofactor biosynthesis; thiamine diphosphate biosynthesis. Its function is as follows. Catalyzes the synthesis of the hydroxymethylpyrimidine phosphate (HMP-P) moiety of thiamine from aminoimidazole ribotide (AIR) in a radical S-adenosyl-L-methionine (SAM)-dependent reaction. The chain is Phosphomethylpyrimidine synthase from Chromobacterium violaceum (strain ATCC 12472 / DSM 30191 / JCM 1249 / CCUG 213 / NBRC 12614 / NCIMB 9131 / NCTC 9757 / MK).